A 317-amino-acid polypeptide reads, in one-letter code: tRNA dimethylallyltransferase (317 aa).

14–21 (GPTAVGKT) is an ATP binding site. Residue 16 to 21 (TAVGKT) participates in substrate binding. The tract at residues 39–42 (DSMQ) is interaction with substrate tRNA.

This sequence belongs to the IPP transferase family. Monomer. The cofactor is Mg(2+).

It catalyses the reaction adenosine(37) in tRNA + dimethylallyl diphosphate = N(6)-dimethylallyladenosine(37) in tRNA + diphosphate. Its function is as follows. Catalyzes the transfer of a dimethylallyl group onto the adenine at position 37 in tRNAs that read codons beginning with uridine, leading to the formation of N6-(dimethylallyl)adenosine (i(6)A). The sequence is that of tRNA dimethylallyltransferase from Bacillus cereus (strain G9842).